The sequence spans 683 residues: Protein kinase C eta type (683 aa).

One can recognise a C2 domain in the interval 1–118; sequence MSSGTMKFNG…LRTAGTSDTF (118 aa). S28 and S32 each carry phosphoserine. Phorbol-ester/DAG-type zinc fingers lie at residues 171–222 and 245–295; these read GHKF…VTAC and PHKF…APNC. The residue at position 317 (S317) is a Phosphoserine. In terms of domain architecture, Protein kinase spans 355–614; that stretch reads FEFIRVLGKG…EHEILRHPFF (260 aa). Residues 361-369 and K384 each bind ATP; that span reads LGKGSFGKV. The active-site Proton acceptor is D479. A Phosphothreonine; by PDPK1 modification is found at T513. One can recognise an AGC-kinase C-terminal domain in the interval 615 to 683; the sequence is KEIDWVQLNH…FSYVSPELQP (69 aa). T656 bears the Phosphothreonine mark. Position 675 is a phosphoserine (S675).

This sequence belongs to the protein kinase superfamily. AGC Ser/Thr protein kinase family. PKC subfamily. In terms of assembly, interacts with FYN. Interacts with RALA. Interacts with DGKQ.

The protein localises to the cytoplasm. It carries out the reaction L-seryl-[protein] + ATP = O-phospho-L-seryl-[protein] + ADP + H(+). The catalysed reaction is L-threonyl-[protein] + ATP = O-phospho-L-threonyl-[protein] + ADP + H(+). With respect to regulation, novel PKCs (PRKCD, PRKCE, PRKCH and PRKCQ) are calcium-insensitive, but activated by diacylglycerol (DAG) and phosphatidylserine. Three specific sites; Thr-513 (activation loop of the kinase domain), Thr-656 (turn motif) and Ser-675 (hydrophobic region), need to be phosphorylated for its full activation. Calcium-independent, phospholipid- and diacylglycerol (DAG)-dependent serine/threonine-protein kinase that is involved in the regulation of cell differentiation in keratinocytes and pre-B cell receptor, mediates regulation of epithelial tight junction integrity and foam cell formation, and is required for glioblastoma proliferation and apoptosis prevention in MCF-7 cells. In keratinocytes, binds and activates the tyrosine kinase FYN, which in turn blocks epidermal growth factor receptor (EGFR) signaling and leads to keratinocyte growth arrest and differentiation. Associates with the cyclin CCNE1-CDK2-CDKN1B complex and inhibits CDK2 kinase activity, leading to RB1 dephosphorylation and thereby G1 arrest in keratinocytes. In association with RALA activates actin depolymerization, which is necessary for keratinocyte differentiation. In the pre-B cell receptor signaling, functions downstream of BLNK by up-regulating IRF4, which in turn activates L chain gene rearrangement. Regulates epithelial tight junctions (TJs) by phosphorylating occludin (OCLN) on threonine residues, which is necessary for the assembly and maintenance of TJs. In association with PLD2 and via TLR4 signaling, is involved in lipopolysaccharide (LPS)-induced RGS2 down-regulation and foam cell formation. Upon PMA stimulation, mediates glioblastoma cell proliferation by activating the mTOR pathway, the PI3K/AKT pathway and the ERK1-dependent phosphorylation of ELK1. Involved in the protection of glioblastoma cells from irradiation-induced apoptosis by preventing caspase-9 activation. In camptothecin-treated MCF-7 cells, regulates NF-kappa-B upstream signaling by activating IKBKB, and confers protection against DNA damage-induced apoptosis. Promotes oncogenic functions of ATF2 in the nucleus while blocking its apoptotic function at mitochondria. Phosphorylates ATF2 which promotes its nuclear retention and transcriptional activity and negatively regulates its mitochondrial localization. In Rattus norvegicus (Rat), this protein is Protein kinase C eta type (Prkch).